A 382-amino-acid chain; its full sequence is 8-amino-7-oxononanoate synthase (382 aa).

Substrate-binding residues include Arg-22 and Arg-29. Residue 109 to 110 coordinates pyridoxal 5'-phosphate; sequence GF. His-134 contributes to the substrate binding site. Pyridoxal 5'-phosphate-binding positions include Ser-182, 207 to 210, and 233 to 236; these read DDAH and TLSK. The residue at position 236 (Lys-236) is an N6-(pyridoxal phosphate)lysine. Thr-345 lines the substrate pocket.

It belongs to the class-II pyridoxal-phosphate-dependent aminotransferase family. BioF subfamily. Homodimer. Pyridoxal 5'-phosphate serves as cofactor.

The catalysed reaction is 6-carboxyhexanoyl-[ACP] + L-alanine + H(+) = (8S)-8-amino-7-oxononanoate + holo-[ACP] + CO2. The protein operates within cofactor biosynthesis; biotin biosynthesis. Its function is as follows. Catalyzes the decarboxylative condensation of pimeloyl-[acyl-carrier protein] and L-alanine to produce 8-amino-7-oxononanoate (AON), [acyl-carrier protein], and carbon dioxide. This Granulibacter bethesdensis (strain ATCC BAA-1260 / CGDNIH1) protein is 8-amino-7-oxononanoate synthase.